The following is a 366-amino-acid chain: tRNA/tmRNA (uracil-C(5))-methyltransferase (366 aa).

5 residues coordinate S-adenosyl-L-methionine: Q189, Y217, N222, E238, and D298. The active-site Nucleophile is the C323. E357 serves as the catalytic Proton acceptor.

The protein belongs to the class I-like SAM-binding methyltransferase superfamily. RNA M5U methyltransferase family. TrmA subfamily.

The enzyme catalyses uridine(54) in tRNA + S-adenosyl-L-methionine = 5-methyluridine(54) in tRNA + S-adenosyl-L-homocysteine + H(+). The catalysed reaction is uridine(341) in tmRNA + S-adenosyl-L-methionine = 5-methyluridine(341) in tmRNA + S-adenosyl-L-homocysteine + H(+). In terms of biological role, dual-specificity methyltransferase that catalyzes the formation of 5-methyluridine at position 54 (m5U54) in all tRNAs, and that of position 341 (m5U341) in tmRNA (transfer-mRNA). The chain is tRNA/tmRNA (uracil-C(5))-methyltransferase from Shewanella oneidensis (strain ATCC 700550 / JCM 31522 / CIP 106686 / LMG 19005 / NCIMB 14063 / MR-1).